The sequence spans 24 residues: Transaldolase (24 aa).

It belongs to the transaldolase family.

It is found in the cytoplasm. The catalysed reaction is D-sedoheptulose 7-phosphate + D-glyceraldehyde 3-phosphate = D-erythrose 4-phosphate + beta-D-fructose 6-phosphate. The protein operates within carbohydrate degradation; pentose phosphate pathway; D-glyceraldehyde 3-phosphate and beta-D-fructose 6-phosphate from D-ribose 5-phosphate and D-xylulose 5-phosphate (non-oxidative stage): step 2/3. Functionally, transaldolase is important for the balance of metabolites in the pentose-phosphate pathway. The chain is Transaldolase from Capsicum annuum var. annuum (Red pepper).